The sequence spans 345 residues: Serine/threonine-protein kinase US3 homolog (345 aa).

The region spanning 49-334 is the Protein kinase domain; that stretch reads FSVLETFTPG…KALLDFAAFY (286 aa). ATP is bound by residues 55–63 and Lys-78; that span reads FTPGAEGFT. The Proton acceptor role is filled by Asp-162.

Belongs to the protein kinase superfamily. Ser/Thr protein kinase family. In terms of processing, phosphorylated by UL13 homolog; this phosphorylation regulates subsequent phosphorylation of UL31 and UL34 homologs by US3. Autophosphorylated.

The protein localises to the host cytoplasm. Its subcellular location is the host nucleus. It carries out the reaction L-seryl-[protein] + ATP = O-phospho-L-seryl-[protein] + ADP + H(+). The catalysed reaction is L-threonyl-[protein] + ATP = O-phospho-L-threonyl-[protein] + ADP + H(+). In terms of biological role, multifunctional serine/threonine kinase that plays a role in several processes including egress of virus particles from the nucleus, modulation of the actin cytoskeleton and inhibition of apoptosis. Phosphorylates UL31 and UL34 homologs, two critical regulators of capsid budding from nucleus to endoplasmic reticulum, thereby facilitating virion egress. Modulates and redistributes host components of the nuclear envelope, including LMNA, emerin/EMD and the nuclear matrix protein MATR3. Phosphorylates envelope glycoprotein B (gB), probably to direct it to the cell surface. Promotes virus intracellular spread by restructuring host cell cytoskeleton. Blocks host apoptosis to extend cell survival and allow efficient viral replication. Promotes viral gene expression by phosphorylating host HDAC2 to reduce viral genome silencing. This Chlorocebus aethiops (Green monkey) protein is Serine/threonine-protein kinase US3 homolog (US2).